A 247-amino-acid chain; its full sequence is Carboxy-S-adenosyl-L-methionine synthase (247 aa).

S-adenosyl-L-methionine contacts are provided by residues tyrosine 39, 64-66, 89-90, 117-118, asparagine 132, and arginine 199; these read GCS, DN, and DI.

The protein belongs to the class I-like SAM-binding methyltransferase superfamily. Cx-SAM synthase family. Homodimer.

It carries out the reaction prephenate + S-adenosyl-L-methionine = carboxy-S-adenosyl-L-methionine + 3-phenylpyruvate + H2O. Catalyzes the conversion of S-adenosyl-L-methionine (SAM) to carboxy-S-adenosyl-L-methionine (Cx-SAM). The chain is Carboxy-S-adenosyl-L-methionine synthase from Escherichia coli O17:K52:H18 (strain UMN026 / ExPEC).